An 857-amino-acid polypeptide reads, in one-letter code: Major vault protein (857 aa).

MVP repeat units lie at residues 18–60, 62–122, 123–174, 175–227, 228–282, 284–332, 333–387, and 388–441; these read PYYY…ITIP, RHYC…KVVQ, ANAA…TIIR, PNQA…YVLT, EKNA…NTLT, RQYC…FILG, EDEG…IPLD, and ENEG…VAER. The segment at 434–453 is disordered; the sequence is AKDPVAERSDRRGDRAAPRA. Over residues 437–453 the composition is skewed to basic and acidic residues; that stretch reads PVAERSDRRGDRAAPRA. In terms of domain architecture, IQ spans 665–694; the sequence is ARHEAERLEQEARGRLERQKIMDEAEAEKS.

As to quaternary structure, the vault ribonucleoprotein particle is a huge (400 A x 670 A) cage structure of 12.9 MDa. It consists of a dimer of half-vaults, with each half-vault comprising 39 identical major vault protein (MVP) chains, PARP4 and one or more vault RNAs (vRNAs). Expressed in embryos, tube feet and coelomocytes (at protein level). Not expressed in sperm cells (at protein level).

It is found in the cytoplasm. It localises to the nucleus. Functionally, required for normal vault structure. Vaults are multi-subunit structures that may act as scaffolds for proteins involved in signal transduction. Vaults may also play a role in nucleo-cytoplasmic transport. This chain is Major vault protein, found in Strongylocentrotus purpuratus (Purple sea urchin).